The primary structure comprises 246 residues: Protein phosphatase PhpP (246 aa).

The region spanning 2–240 (EISLLTDVGQ…DNITVALVSM (239 aa)) is the PPM-type phosphatase domain. Positions 36, 37, 192, and 231 each coordinate Mn(2+).

Belongs to the PP2C family. Interacts with the kinase domain of StkP. Mn(2+) serves as cofactor.

The protein resides in the cytoplasm. The catalysed reaction is O-phospho-L-seryl-[protein] + H2O = L-seryl-[protein] + phosphate. It carries out the reaction O-phospho-L-threonyl-[protein] + H2O = L-threonyl-[protein] + phosphate. Its activity is regulated as follows. Phosphatase activity is inhibited by NaF but not by okadaic acid. Its function is as follows. Protein phosphatase able to dephosphorylate StkP-P and a phosphothreonine residue in a phosphopeptide synthetic substrate. PhpP and its cognate protein kinase StkP appear to constitute a functional signaling couple in vivo, PhpP's primary role probably being to control phosphorylation levels of StkP and of its targets (which include LocZ, DivIVA and KhpB (also called EloR/Jag)). PhpP thus performs an essential control of StkP activity. Overexpression confers an stkP deletion-like phenotype. The chain is Protein phosphatase PhpP (phpP) from Streptococcus pneumoniae.